Reading from the N-terminus, the 272-residue chain is Shikimate dehydrogenase (NADP(+)) (272 aa).

Residues 14 to 16 and Thr61 each bind shikimate; that span reads SKS. The active-site Proton acceptor is the Lys65. Position 77 (Glu77) interacts with NADP(+). 2 residues coordinate shikimate: Asn86 and Asp102. Residues 126–130, 149–154, and Met213 contribute to the NADP(+) site; these read GAGGA and NRTVSR. Shikimate is bound at residue Tyr215. Gly237 is an NADP(+) binding site.

Belongs to the shikimate dehydrogenase family. Homodimer.

It carries out the reaction shikimate + NADP(+) = 3-dehydroshikimate + NADPH + H(+). It participates in metabolic intermediate biosynthesis; chorismate biosynthesis; chorismate from D-erythrose 4-phosphate and phosphoenolpyruvate: step 4/7. In terms of biological role, involved in the biosynthesis of the chorismate, which leads to the biosynthesis of aromatic amino acids. Catalyzes the reversible NADPH linked reduction of 3-dehydroshikimate (DHSA) to yield shikimate (SA). The protein is Shikimate dehydrogenase (NADP(+)) of Shigella dysenteriae serotype 1 (strain Sd197).